Consider the following 329-residue polypeptide: Glycerol-3-phosphate dehydrogenase [NAD(P)+] (329 aa).

The NADPH site is built by tryptophan 15, histidine 35, and lysine 107. Lysine 107, glycine 135, and serine 137 together coordinate sn-glycerol 3-phosphate. Alanine 139 contributes to the NADPH binding site. The sn-glycerol 3-phosphate site is built by lysine 190, aspartate 243, serine 253, arginine 254, and asparagine 255. The active-site Proton acceptor is lysine 190. Arginine 254 contacts NADPH. 2 residues coordinate NADPH: leucine 276 and glutamate 278.

Belongs to the NAD-dependent glycerol-3-phosphate dehydrogenase family.

It is found in the cytoplasm. It catalyses the reaction sn-glycerol 3-phosphate + NAD(+) = dihydroxyacetone phosphate + NADH + H(+). The enzyme catalyses sn-glycerol 3-phosphate + NADP(+) = dihydroxyacetone phosphate + NADPH + H(+). Its pathway is membrane lipid metabolism; glycerophospholipid metabolism. Its function is as follows. Catalyzes the reduction of the glycolytic intermediate dihydroxyacetone phosphate (DHAP) to sn-glycerol 3-phosphate (G3P), the key precursor for phospholipid synthesis. In Rhodopseudomonas palustris (strain TIE-1), this protein is Glycerol-3-phosphate dehydrogenase [NAD(P)+].